Reading from the N-terminus, the 160-residue chain is Sec-independent protein translocase protein TatB (160 aa).

A helical transmembrane segment spans residues 1–21 (MFGMGFFEILVVLVVAIIFLG). Positions 118–160 (HLNEEVSNEEALNKEVSSDESPKEVQLATDNNTKEHDKEKENV) are disordered. Composition is skewed to basic and acidic residues over residues 128–140 (ALNK…ESPK) and 149–160 (NTKEHDKEKENV).

This sequence belongs to the TatB family. As to quaternary structure, the Tat system comprises two distinct complexes: a TatABC complex, containing multiple copies of TatA, TatB and TatC subunits, and a separate TatA complex, containing only TatA subunits. Substrates initially bind to the TatABC complex, which probably triggers association of the separate TatA complex to form the active translocon.

The protein resides in the cell inner membrane. In terms of biological role, part of the twin-arginine translocation (Tat) system that transports large folded proteins containing a characteristic twin-arginine motif in their signal peptide across membranes. Together with TatC, TatB is part of a receptor directly interacting with Tat signal peptides. TatB may form an oligomeric binding site that transiently accommodates folded Tat precursor proteins before their translocation. In Helicobacter pylori (strain ATCC 700392 / 26695) (Campylobacter pylori), this protein is Sec-independent protein translocase protein TatB.